The chain runs to 205 residues: Large ribosomal subunit protein uL4 (205 aa).

The tract at residues 44-79 is disordered; sequence RAGTKAQKTRREVSGSGAKPWRQKGTGRARAGSSRS.

It belongs to the universal ribosomal protein uL4 family. As to quaternary structure, part of the 50S ribosomal subunit.

Its function is as follows. One of the primary rRNA binding proteins, this protein initially binds near the 5'-end of the 23S rRNA. It is important during the early stages of 50S assembly. It makes multiple contacts with different domains of the 23S rRNA in the assembled 50S subunit and ribosome. Forms part of the polypeptide exit tunnel. The chain is Large ribosomal subunit protein uL4 from Coxiella burnetii (strain Dugway 5J108-111).